The following is a 385-amino-acid chain: MSARLADVIEVLDHAYPPRFAQSWDSVGLVCGDPEDVLEAITIAVDATPAVIDEVPDSGLLLVHHPLLLHGVDTVAVSTPKGALVHRLIRSGRSLFTAHTNADSASPGVSDALAHVFGLTVDAVLEPLLGVASLDKWVIYVPLEHVAAVQAAVFEAGAGHIGDYSHCSWSVTGTGQFMPHDGASPVVGSIGAIERVAEDRVEVVAPARARAAVLSAMHAAHPYEEPAFDIFALVPPPGDVGLGRIGTLPRPESLSAFVARVGAALPQTSSGVRATGDPDMLVSRVAVCGGAGDSLLSLAAVADVQAYVTADLRHHPADEHRRASNVALIDVAHWASEFPWCGQAADVLRSHFGTALSVRVCTIRTDPWNLGARRVNDVSDSGRDQ.

Positions 64, 65, 103, 333, and 337 each coordinate a divalent metal cation.

This sequence belongs to the GTP cyclohydrolase I type 2/NIF3 family. In terms of assembly, homohexamer.

This Mycobacterium leprae (strain TN) protein is GTP cyclohydrolase 1 type 2 homolog.